The sequence spans 142 residues: Protein archease (142 aa).

Positions 12, 141, and 142 each coordinate Ca(2+).

The protein belongs to the archease family.

Activates the tRNA-splicing ligase complex by facilitating the enzymatic turnover of catalytic subunit RtcB. Acts by promoting the guanylylation of RtcB, a key intermediate step in tRNA ligation. Can also alter the NTP specificity of RtcB such that ATP, dGTP or ITP is used efficiently. This Thermococcus gammatolerans (strain DSM 15229 / JCM 11827 / EJ3) protein is Protein archease.